A 154-amino-acid chain; its full sequence is Endoribonuclease YbeY (154 aa).

Zn(2+) is bound by residues His116, His120, and His126.

It belongs to the endoribonuclease YbeY family. Requires Zn(2+) as cofactor.

Its subcellular location is the cytoplasm. Its function is as follows. Single strand-specific metallo-endoribonuclease involved in late-stage 70S ribosome quality control and in maturation of the 3' terminus of the 16S rRNA. The chain is Endoribonuclease YbeY from Chromohalobacter salexigens (strain ATCC BAA-138 / DSM 3043 / CIP 106854 / NCIMB 13768 / 1H11).